The primary structure comprises 223 residues: Ras-related protein Rab-37 (223 aa).

Low complexity predominate over residues 1–13 (MTGTPGAATAGDG). The disordered stretch occupies residues 1 to 22 (MTGTPGAATAGDGEAPERSPPF). Position 2 is an N-acetylthreonine (Thr-2). GTP contacts are provided by Ser-38, Gly-39, Val-40, Gly-41, Lys-42, Thr-43, Cys-44, and Thr-62. Thr-43 serves as a coordination point for Mg(2+). 2 short sequence motifs (switch) span residues 52 to 67 (GAFL…GIDS) and 85 to 102 (DTAG…YYRD). 2 residues coordinate Mg(2+): Thr-62 and Asp-85. 7 residues coordinate GTP: Gly-88, Asn-143, Lys-144, Asp-146, Ser-173, Ala-174, and Lys-175. 2 S-geranylgeranyl cysteine lipidation sites follow: Cys-219 and Cys-220. Cys-220 carries the cysteine methyl ester modification. A propeptide spans 221–223 (SFV) (removed in mature form).

This sequence belongs to the small GTPase superfamily. Rab family. In terms of assembly, interacts with RIMS1. Interacts (in GDP-bound form) with RPGR, RPGR functions as guanine exchange factor (GEF). Mg(2+) is required as a cofactor. As to expression, expressed in the retina (at protein level). Specifically expressed in the bone marrow mast cells.

It localises to the cytoplasmic vesicle. It is found in the cell projection. The protein resides in the cilium. It catalyses the reaction GTP + H2O = GDP + phosphate + H(+). With respect to regulation, regulated by guanine nucleotide exchange factors (GEFs) including RPGR which promote the exchange of bound GDP for free GTP. Regulated by GTPase activating proteins (GAPs) which increase the GTP hydrolysis activity. Inhibited by GDP dissociation inhibitors (GDIs). In terms of biological role, the small GTPases Rab are key regulators of intracellular membrane trafficking, from the formation of transport vesicles to their fusion with membranes. Rabs cycle between an inactive GDP-bound form and an active GTP-bound form that is able to recruit to membranes different sets of downstream effectors directly responsible for vesicle formation, movement, tethering and fusion. Acts as an organizer for autophagosome biogenesis in a GTP-dependent manner. Involved in retinal homeostasis by autophagy regulation. The protein is Ras-related protein Rab-37 of Mus musculus (Mouse).